We begin with the raw amino-acid sequence, 274 residues long: Penicillin-insensitive murein endopeptidase (274 aa).

The N-terminal stretch at 1-19 is a signal peptide; that stretch reads MNKTAIALLALLASSASLA. Intrachain disulfides connect Cys44–Cys265, Cys187–Cys235, and Cys216–Cys223. Zn(2+)-binding residues include His110, His113, Asp120, Asp147, His150, and His211. Positions 228-265 are disordered; it reads LPPPGDGCGAELQSWFAPPKPGTTKPEKKTPPPLPPSC.

This sequence belongs to the peptidase M74 family. As to quaternary structure, dimer. Zn(2+) serves as cofactor.

It localises to the periplasm. Functionally, murein endopeptidase that cleaves the D-alanyl-meso-2,6-diamino-pimelyl amide bond that connects peptidoglycan strands. Likely plays a role in the removal of murein from the sacculus. This Shigella boydii serotype 18 (strain CDC 3083-94 / BS512) protein is Penicillin-insensitive murein endopeptidase.